We begin with the raw amino-acid sequence, 558 residues long: Hepatocyte nuclear factor 1-beta (558 aa).

Residues 1 to 31 (MVSKLTSLQQELLSALLSSGVTKEVLIQALE) are dimerization. The HNF-p1 domain maps to 1–32 (MVSKLTSLQQELLSALLSSGVTKEVLIQALEE). Ser-49, Ser-52, Ser-75, and Ser-80 each carry phosphoserine. A disordered region spans residues 66 to 85 (TNGHAKGRLSGDEGSEDGDD). A POU-specific atypical domain is found at 93–188 (KELQALNTEE…ILRQFNQTVQ (96 aa)). The segment at residues 231–311 (MRRNRFKWGP…NRRKEEAFRQ (81 aa)) is a DNA-binding region (homeobox; HNF1-type). Residues 323 to 348 (THNLNPLLTHGSPHHQPSSSPPNKMS) form a disordered region.

The protein belongs to the HNF1 homeobox family. As to quaternary structure, binds DNA as a dimer. Can form homodimer or heterodimer with HNF1-alpha. Interacts (via HNF-p1 domain) with PCBD1; the interaction increases its transactivation activity.

The protein resides in the nucleus. Functionally, transcription factor that binds to the inverted palindrome 5'-GTTAATNATTAAC-3'. Binds to the FPC element in the cAMP regulatory unit of the PLAU gene. Transcriptional activity is increased by coactivator PCBD1. This chain is Hepatocyte nuclear factor 1-beta (Hnf1b), found in Mus musculus (Mouse).